Here is a 945-residue protein sequence, read N- to C-terminus: Isoleucine--tRNA ligase (945 aa).

The short motif at 66 to 76 (PYANGDIHLGH) is the 'HIGH' region element. An L-isoleucyl-5'-AMP-binding site is contributed by Glu-581. The 'KMSKS' region signature appears at 622–626 (KMSKS). Residue Lys-625 coordinates ATP. Residues Cys-908, Cys-911, Cys-928, and Cys-931 each contribute to the Zn(2+) site.

This sequence belongs to the class-I aminoacyl-tRNA synthetase family. IleS type 1 subfamily. Monomer. The cofactor is Zn(2+).

The protein resides in the cytoplasm. The catalysed reaction is tRNA(Ile) + L-isoleucine + ATP = L-isoleucyl-tRNA(Ile) + AMP + diphosphate. Catalyzes the attachment of isoleucine to tRNA(Ile). As IleRS can inadvertently accommodate and process structurally similar amino acids such as valine, to avoid such errors it has two additional distinct tRNA(Ile)-dependent editing activities. One activity is designated as 'pretransfer' editing and involves the hydrolysis of activated Val-AMP. The other activity is designated 'posttransfer' editing and involves deacylation of mischarged Val-tRNA(Ile). The sequence is that of Isoleucine--tRNA ligase from Paraburkholderia xenovorans (strain LB400).